A 270-amino-acid chain; its full sequence is 5'-AMP-activated protein kinase subunit beta-1 (270 aa).

The disordered stretch occupies residues Met1–Asp43. A lipid anchor (N-myristoyl glycine) is attached at Gly2. Position 4 is a phosphothreonine (Thr4). 2 positions are modified to phosphoserine: Ser5 and Ser6. Over residues Ala9–Ile36 the composition is skewed to basic and acidic residues. Thr19 is subject to Phosphothreonine. Ser24 and Ser25 each carry phosphoserine; by autocatalysis. 3 positions are modified to phosphoserine: Ser40, Ser96, and Ser101. The glycogen-binding domain stretch occupies residues Glu68–Phe163. Ser108 is subject to Phosphoserine; by autocatalysis. Thr148 is subject to Phosphothreonine. Residue Ser182 is modified to Phosphoserine. Lys201 carries the N6-succinyllysine modification.

The protein belongs to the 5'-AMP-activated protein kinase beta subunit family. As to quaternary structure, AMPK is a heterotrimer of an alpha catalytic subunit (PRKAA1 or PRKAA2), a beta (PRKAB1 or PRKAB2) and a gamma non-catalytic subunits (PRKAG1, PRKAG2 or PRKAG3). Interacts with FNIP1 and FNIP2. Post-translationally, phosphorylated when associated with the catalytic subunit (PRKAA1 or PRKAA2). Phosphorylated by ULK1; leading to negatively regulate AMPK activity and suggesting the existence of a regulatory feedback loop between ULK1 and AMPK. Highly expressed in kidney, heart, white adipose tissue, lung and spleen.

Its function is as follows. Non-catalytic subunit of AMP-activated protein kinase (AMPK), an energy sensor protein kinase that plays a key role in regulating cellular energy metabolism. In response to reduction of intracellular ATP levels, AMPK activates energy-producing pathways and inhibits energy-consuming processes: inhibits protein, carbohydrate and lipid biosynthesis, as well as cell growth and proliferation. AMPK acts via direct phosphorylation of metabolic enzymes, and by longer-term effects via phosphorylation of transcription regulators. Also acts as a regulator of cellular polarity by remodeling the actin cytoskeleton; probably by indirectly activating myosin. Beta non-catalytic subunit acts as a scaffold on which the AMPK complex assembles, via its C-terminus that bridges alpha (PRKAA1 or PRKAA2) and gamma subunits (PRKAG1, PRKAG2 or PRKAG3). This Rattus norvegicus (Rat) protein is 5'-AMP-activated protein kinase subunit beta-1 (Prkab1).